A 482-amino-acid polypeptide reads, in one-letter code: tRNA sulfurtransferase (482 aa).

The 105-residue stretch at Leu-61 to Arg-165 folds into the THUMP domain. ATP contacts are provided by residues Leu-183–Ile-184, Lys-265, Gly-287, and Gln-296. Cys-344 and Cys-456 are oxidised to a cystine. The region spanning Phe-404–Pro-482 is the Rhodanese domain. Catalysis depends on Cys-456, which acts as the Cysteine persulfide intermediate.

It belongs to the ThiI family.

The protein resides in the cytoplasm. The catalysed reaction is [ThiI sulfur-carrier protein]-S-sulfanyl-L-cysteine + a uridine in tRNA + 2 reduced [2Fe-2S]-[ferredoxin] + ATP + H(+) = [ThiI sulfur-carrier protein]-L-cysteine + a 4-thiouridine in tRNA + 2 oxidized [2Fe-2S]-[ferredoxin] + AMP + diphosphate. It catalyses the reaction [ThiS sulfur-carrier protein]-C-terminal Gly-Gly-AMP + S-sulfanyl-L-cysteinyl-[cysteine desulfurase] + AH2 = [ThiS sulfur-carrier protein]-C-terminal-Gly-aminoethanethioate + L-cysteinyl-[cysteine desulfurase] + A + AMP + 2 H(+). It functions in the pathway cofactor biosynthesis; thiamine diphosphate biosynthesis. Functionally, catalyzes the ATP-dependent transfer of a sulfur to tRNA to produce 4-thiouridine in position 8 of tRNAs, which functions as a near-UV photosensor. Also catalyzes the transfer of sulfur to the sulfur carrier protein ThiS, forming ThiS-thiocarboxylate. This is a step in the synthesis of thiazole, in the thiamine biosynthesis pathway. The sulfur is donated as persulfide by IscS. The protein is tRNA sulfurtransferase of Salmonella agona (strain SL483).